A 104-amino-acid chain; its full sequence is ATP-dependent Clp protease adapter protein ClpS (104 aa).

It belongs to the ClpS family. In terms of assembly, binds to the N-terminal domain of the chaperone ClpA.

Its function is as follows. Involved in the modulation of the specificity of the ClpAP-mediated ATP-dependent protein degradation. The chain is ATP-dependent Clp protease adapter protein ClpS from Neisseria gonorrhoeae (strain ATCC 700825 / FA 1090).